Consider the following 245-residue polypeptide: 5-oxoprolinase subunit A (245 aa).

The protein belongs to the LamB/PxpA family. As to quaternary structure, forms a complex composed of PxpA, PxpB and PxpC.

The enzyme catalyses 5-oxo-L-proline + ATP + 2 H2O = L-glutamate + ADP + phosphate + H(+). In terms of biological role, catalyzes the cleavage of 5-oxoproline to form L-glutamate coupled to the hydrolysis of ATP to ADP and inorganic phosphate. In Chromobacterium violaceum (strain ATCC 12472 / DSM 30191 / JCM 1249 / CCUG 213 / NBRC 12614 / NCIMB 9131 / NCTC 9757 / MK), this protein is 5-oxoprolinase subunit A.